Consider the following 82-residue polypeptide: ATP synthase subunit c, chloroplastic (82 aa).

The next 2 helical transmembrane spans lie at 4 to 24 (IISAASVIAAGLAIGLAAIGP) and 57 to 77 (LAFMEALTIYGLVVALALLFA).

Belongs to the ATPase C chain family. As to quaternary structure, F-type ATPases have 2 components, F(1) - the catalytic core - and F(0) - the membrane proton channel. F(1) has five subunits: alpha(3), beta(3), gamma(1), delta(1), epsilon(1). F(0) has four main subunits: a(1), b(1), b'(1) and c(10-14). The alpha and beta chains form an alternating ring which encloses part of the gamma chain. F(1) is attached to F(0) by a central stalk formed by the gamma and epsilon chains, while a peripheral stalk is formed by the delta, b and b' chains.

Its subcellular location is the plastid. It localises to the chloroplast thylakoid membrane. Its function is as follows. F(1)F(0) ATP synthase produces ATP from ADP in the presence of a proton or sodium gradient. F-type ATPases consist of two structural domains, F(1) containing the extramembraneous catalytic core and F(0) containing the membrane proton channel, linked together by a central stalk and a peripheral stalk. During catalysis, ATP synthesis in the catalytic domain of F(1) is coupled via a rotary mechanism of the central stalk subunits to proton translocation. Key component of the F(0) channel; it plays a direct role in translocation across the membrane. A homomeric c-ring of between 10-14 subunits forms the central stalk rotor element with the F(1) delta and epsilon subunits. This chain is ATP synthase subunit c, chloroplastic, found in Trieres chinensis (Marine centric diatom).